A 189-amino-acid polypeptide reads, in one-letter code: Elongation factor P (189 aa).

It belongs to the elongation factor P family.

It is found in the cytoplasm. Its pathway is protein biosynthesis; polypeptide chain elongation. In terms of biological role, involved in peptide bond synthesis. Stimulates efficient translation and peptide-bond synthesis on native or reconstituted 70S ribosomes in vitro. Probably functions indirectly by altering the affinity of the ribosome for aminoacyl-tRNA, thus increasing their reactivity as acceptors for peptidyl transferase. The chain is Elongation factor P from Pseudomonas putida (strain GB-1).